The primary structure comprises 250 residues: Triosephosphate isomerase (250 aa).

Position 9–11 (9–11) interacts with substrate; sequence NWK. His96 serves as the catalytic Electrophile. Glu168 functions as the Proton acceptor in the catalytic mechanism. Substrate is bound by residues Gly174, Ser216, and 237 to 238; that span reads GG.

It belongs to the triosephosphate isomerase family. As to quaternary structure, homodimer.

The protein resides in the cytoplasm. It carries out the reaction D-glyceraldehyde 3-phosphate = dihydroxyacetone phosphate. It functions in the pathway carbohydrate biosynthesis; gluconeogenesis. The protein operates within carbohydrate degradation; glycolysis; D-glyceraldehyde 3-phosphate from glycerone phosphate: step 1/1. Functionally, involved in the gluconeogenesis. Catalyzes stereospecifically the conversion of dihydroxyacetone phosphate (DHAP) to D-glyceraldehyde-3-phosphate (G3P). This is Triosephosphate isomerase from Leptospira interrogans serogroup Icterohaemorrhagiae serovar Lai (strain 56601).